A 232-amino-acid chain; its full sequence is MGQKINPIGLRLGINRTWDSRWFAGKNEYGKLLHEDVKIREILHKELKQAAVARIVIERPHKKCRVTIHSARPGVVIGKKGADIDKLRKKVADITASDVVINIVEIRKPELDATLVAESIAQQLERRVAFRRAMKRAVQSAMRLGAEGIRINCSGRLGGAEIARMEWYREGRVPLHTLRADIDYGVATAFTTFGTCGVKVWIFKGEILEHDPMAQDKRMAEGDNSRPRRDAA.

The KH type-2 domain occupies 39 to 107; that stretch reads IREILHKELK…DVVINIVEIR (69 aa).

The protein belongs to the universal ribosomal protein uS3 family. In terms of assembly, part of the 30S ribosomal subunit. Forms a tight complex with proteins S10 and S14.

Its function is as follows. Binds the lower part of the 30S subunit head. Binds mRNA in the 70S ribosome, positioning it for translation. In Rhodopseudomonas palustris (strain HaA2), this protein is Small ribosomal subunit protein uS3.